Here is a 275-residue protein sequence, read N- to C-terminus: Large ribosomal subunit protein uL2 (275 aa).

A disordered region spans residues 208–275; that stretch reads AGAKRWRGRR…NMIIRDRRKK (68 aa). 2 stretches are compositionally biased toward basic residues: residues 209 to 219 and 254 to 263; these read GAKRWRGRRPT and KGYKTRRNKR.

The protein belongs to the universal ribosomal protein uL2 family. In terms of assembly, part of the 50S ribosomal subunit. Forms a bridge to the 30S subunit in the 70S ribosome.

Functionally, one of the primary rRNA binding proteins. Required for association of the 30S and 50S subunits to form the 70S ribosome, for tRNA binding and peptide bond formation. It has been suggested to have peptidyltransferase activity; this is somewhat controversial. Makes several contacts with the 16S rRNA in the 70S ribosome. The chain is Large ribosomal subunit protein uL2 from Coxiella burnetii (strain CbuG_Q212) (Coxiella burnetii (strain Q212)).